A 346-amino-acid polypeptide reads, in one-letter code: Holliday junction branch migration complex subunit RuvB (346 aa).

Residues 1 to 11 show a composition bias toward polar residues; sequence MTEQRTIASSA. A disordered region spans residues 1–20; that stretch reads MTEQRTIASSATREDEAADA. A large ATPase domain (RuvB-L) region spans residues 1–183; that stretch reads MTEQRTIASS…FGIVQRLEFY (183 aa). ATP-binding positions include isoleucine 22, arginine 23, glycine 64, lysine 67, threonine 68, threonine 69, 130–132, arginine 173, tyrosine 183, and arginine 220; that span reads EDF. Threonine 68 serves as a coordination point for Mg(2+). The segment at 184–254 is small ATPAse domain (RuvB-S); that stretch reads SPQELTRIVI…VAQAAMQMLK (71 aa). The tract at residues 257–346 is head domain (RuvB-H); that stretch reads PEGFDELDRR…PAIGEPGDLF (90 aa). Residues arginine 293, arginine 312, and arginine 317 each coordinate DNA.

This sequence belongs to the RuvB family. In terms of assembly, homohexamer. Forms an RuvA(8)-RuvB(12)-Holliday junction (HJ) complex. HJ DNA is sandwiched between 2 RuvA tetramers; dsDNA enters through RuvA and exits via RuvB. An RuvB hexamer assembles on each DNA strand where it exits the tetramer. Each RuvB hexamer is contacted by two RuvA subunits (via domain III) on 2 adjacent RuvB subunits; this complex drives branch migration. In the full resolvosome a probable DNA-RuvA(4)-RuvB(12)-RuvC(2) complex forms which resolves the HJ.

The protein localises to the cytoplasm. It carries out the reaction ATP + H2O = ADP + phosphate + H(+). The RuvA-RuvB-RuvC complex processes Holliday junction (HJ) DNA during genetic recombination and DNA repair, while the RuvA-RuvB complex plays an important role in the rescue of blocked DNA replication forks via replication fork reversal (RFR). RuvA specifically binds to HJ cruciform DNA, conferring on it an open structure. The RuvB hexamer acts as an ATP-dependent pump, pulling dsDNA into and through the RuvAB complex. RuvB forms 2 homohexamers on either side of HJ DNA bound by 1 or 2 RuvA tetramers; 4 subunits per hexamer contact DNA at a time. Coordinated motions by a converter formed by DNA-disengaged RuvB subunits stimulates ATP hydrolysis and nucleotide exchange. Immobilization of the converter enables RuvB to convert the ATP-contained energy into a lever motion, pulling 2 nucleotides of DNA out of the RuvA tetramer per ATP hydrolyzed, thus driving DNA branch migration. The RuvB motors rotate together with the DNA substrate, which together with the progressing nucleotide cycle form the mechanistic basis for DNA recombination by continuous HJ branch migration. Branch migration allows RuvC to scan DNA until it finds its consensus sequence, where it cleaves and resolves cruciform DNA. This Xanthomonas campestris pv. campestris (strain B100) protein is Holliday junction branch migration complex subunit RuvB.